Reading from the N-terminus, the 155-residue chain is Small ribosomal subunit protein uS7c (155 aa).

This sequence belongs to the universal ribosomal protein uS7 family. In terms of assembly, part of the 30S ribosomal subunit.

It localises to the plastid. It is found in the chloroplast. One of the primary rRNA binding proteins, it binds directly to 16S rRNA where it nucleates assembly of the head domain of the 30S subunit. The sequence is that of Small ribosomal subunit protein uS7c (rps7) from Physcomitrium patens (Spreading-leaved earth moss).